We begin with the raw amino-acid sequence, 296 residues long: GTPase Era (296 aa).

Residues 7–174 form the Era-type G domain; sequence HCGFVAIVGR…LDQVRPHLPE (168 aa). A G1 region spans residues 15–22; sequence GRPNVGKS. 15 to 22 serves as a coordination point for GTP; sequence GRPNVGKS. The tract at residues 41 to 45 is G2; the sequence is QTTRH. The G3 stretch occupies residues 62–65; that stretch reads DTPG. Residues 62–66 and 123–126 contribute to the GTP site; these read DTPGF and NKLD. A G4 region spans residues 123–126; sequence NKLD. The segment at 153–155 is G5; that stretch reads VSA. A KH type-2 domain is found at 205–281; that stretch reads LGEELPYEMN…FLQVWVKVKS (77 aa).

It belongs to the TRAFAC class TrmE-Era-EngA-EngB-Septin-like GTPase superfamily. Era GTPase family. In terms of assembly, monomer.

It localises to the cytoplasm. The protein localises to the cell inner membrane. In terms of biological role, an essential GTPase that binds both GDP and GTP, with rapid nucleotide exchange. Plays a role in 16S rRNA processing and 30S ribosomal subunit biogenesis and possibly also in cell cycle regulation and energy metabolism. This is GTPase Era from Chromobacterium violaceum (strain ATCC 12472 / DSM 30191 / JCM 1249 / CCUG 213 / NBRC 12614 / NCIMB 9131 / NCTC 9757 / MK).